The primary structure comprises 362 residues: D-alanine--D-alanine ligase (362 aa).

An ATP-grasp domain is found at 141-346 (KNIFAEAGLN…YPELIEELIR (206 aa)). 174–229 (EEALGYPCFVKPANLGSSVGINKCKDREELEKAFEEAFQFDRKIIVEENIIGREVE) contributes to the ATP binding site. Mg(2+) contacts are provided by Asp-300, Glu-313, and Asn-315.

This sequence belongs to the D-alanine--D-alanine ligase family. Requires Mg(2+) as cofactor. The cofactor is Mn(2+).

The protein resides in the cytoplasm. The enzyme catalyses 2 D-alanine + ATP = D-alanyl-D-alanine + ADP + phosphate + H(+). It participates in cell wall biogenesis; peptidoglycan biosynthesis. In terms of biological role, cell wall formation. This chain is D-alanine--D-alanine ligase, found in Bacillus cytotoxicus (strain DSM 22905 / CIP 110041 / 391-98 / NVH 391-98).